A 711-amino-acid chain; its full sequence is Ent-copalyl diphosphate synthase 1 (711 aa).

Lys-145 serves as a coordination point for substrate. The Mg(2+) site is built by Asp-277 and Asp-279. The DXDD motif motif lies at 277–280; sequence DIDD. Residue Lys-364 participates in substrate binding.

It belongs to the terpene synthase family. Tpsc subfamily. Requires Mg(2+) as cofactor.

The enzyme catalyses (2E,6E,10E)-geranylgeranyl diphosphate = ent-copalyl diphosphate. The protein operates within secondary metabolite biosynthesis; terpenoid biosynthesis. In terms of biological role, involved in the biosynthesis of ent-kaurene diterpenoids natural products such as oridonin, miltiradiene, eriocalyxin B and nezukol, known to exhibit antitumor, anti-inflammatory and antibacterial activities. Catalyzes the conversion of (2E,6E,10E)-geranylgeranyl diphosphate (GGPP) to ent-copalyl diphosphate (ent-CPP). In Isodon japonicus (Scutellaria japonica), this protein is Ent-copalyl diphosphate synthase 1.